Consider the following 299-residue polypeptide: Nucleotide-binding protein DIP1313 (299 aa).

Position 22-29 (22-29) interacts with ATP; the sequence is GLSGAGLS. Residue 73 to 76 coordinates GTP; the sequence is DVRS.

Belongs to the RapZ-like family.

Functionally, displays ATPase and GTPase activities. This is Nucleotide-binding protein DIP1313 from Corynebacterium diphtheriae (strain ATCC 700971 / NCTC 13129 / Biotype gravis).